The primary structure comprises 129 residues: Large ribosomal subunit protein uL22 (129 aa).

It belongs to the universal ribosomal protein uL22 family. As to quaternary structure, part of the 50S ribosomal subunit.

Functionally, this protein binds specifically to 23S rRNA; its binding is stimulated by other ribosomal proteins, e.g. L4, L17, and L20. It is important during the early stages of 50S assembly. It makes multiple contacts with different domains of the 23S rRNA in the assembled 50S subunit and ribosome. The globular domain of the protein is located near the polypeptide exit tunnel on the outside of the subunit, while an extended beta-hairpin is found that lines the wall of the exit tunnel in the center of the 70S ribosome. The sequence is that of Large ribosomal subunit protein uL22 from Mesorhizobium japonicum (strain LMG 29417 / CECT 9101 / MAFF 303099) (Mesorhizobium loti (strain MAFF 303099)).